Here is a 390-residue protein sequence, read N- to C-terminus: Imidazolonepropionase (390 aa).

His71 and His73 together coordinate Fe(3+). Zn(2+)-binding residues include His71 and His73. 4-imidazolone-5-propanoate is bound by residues Arg80, Tyr138, and His165. Position 138 (Tyr138) interacts with N-formimidoyl-L-glutamate. A Fe(3+)-binding site is contributed by His228. A Zn(2+)-binding site is contributed by His228. Residue Gln231 coordinates 4-imidazolone-5-propanoate. Residue Asp302 coordinates Fe(3+). Asp302 serves as a coordination point for Zn(2+). Residues Asn304 and Gly306 each contribute to the N-formimidoyl-L-glutamate site. Residue Ser307 participates in 4-imidazolone-5-propanoate binding.

The protein belongs to the metallo-dependent hydrolases superfamily. HutI family. It depends on Zn(2+) as a cofactor. Fe(3+) is required as a cofactor.

The protein localises to the cytoplasm. The catalysed reaction is 4-imidazolone-5-propanoate + H2O = N-formimidoyl-L-glutamate. Its pathway is amino-acid degradation; L-histidine degradation into L-glutamate; N-formimidoyl-L-glutamate from L-histidine: step 3/3. Functionally, catalyzes the hydrolytic cleavage of the carbon-nitrogen bond in imidazolone-5-propanoate to yield N-formimidoyl-L-glutamate. It is the third step in the universal histidine degradation pathway. This is Imidazolonepropionase from Streptomyces griseus subsp. griseus (strain JCM 4626 / CBS 651.72 / NBRC 13350 / KCC S-0626 / ISP 5235).